Consider the following 52-residue polypeptide: UPF0057 membrane protein YqaE (52 aa).

Helical transmembrane passes span 1 to 21 and 23 to 43; these read MGFW…LLGK and FGWA…PGLI.

The protein belongs to the UPF0057 (PMP3) family.

It is found in the cell membrane. The polypeptide is UPF0057 membrane protein YqaE (yqaE) (Escherichia coli O157:H7).